The primary structure comprises 393 residues: MTSDQIKQLDANYIAQTYAKFDLALSHGQGCEVWDFDGNKYLDFTSGIGVNSLGWADPDWLEAVIAQLHKLSHTSNLFYTEPSARLAKHLVQVSGLKRVFFANSGAEANEGAIKVARKYSHDKYGDTRSTIISLVNSFHGRTISTLAATGQKLFHQHFFPFTAGFEHLIANDLNAFKTRIAQNDICAIILEVVQGEGGVCSLDQAYLQAVQGLCQVQDILLIIDEVQTGIGRTGTMFAYQQFELKPDIVTLAKGLAGGLPIGAFLLADKVAETLAKGDHGSTFGANPVSCAAANAVLTKLEPLFLTEVMRKGQKLRKALQSLPHVKSISGLGLMIGVEFDEHINVADVVTNCLKQGVLFLTAKTKLRMLPPLIINDEQLERGVTVLAQVLSEM.

Pyridoxal 5'-phosphate is bound by residues 105 to 106 and F138; that span reads GA. Residue R141 participates in N(2)-acetyl-L-ornithine binding. 224–227 contributes to the pyridoxal 5'-phosphate binding site; sequence DEVQ. K253 carries the N6-(pyridoxal phosphate)lysine modification. Position 281 (S281) interacts with N(2)-acetyl-L-ornithine. T282 contacts pyridoxal 5'-phosphate.

Belongs to the class-III pyridoxal-phosphate-dependent aminotransferase family. ArgD subfamily. As to quaternary structure, homodimer. The cofactor is pyridoxal 5'-phosphate.

Its subcellular location is the cytoplasm. The enzyme catalyses N(2)-acetyl-L-ornithine + 2-oxoglutarate = N-acetyl-L-glutamate 5-semialdehyde + L-glutamate. Its pathway is amino-acid biosynthesis; L-arginine biosynthesis; N(2)-acetyl-L-ornithine from L-glutamate: step 4/4. The protein is Acetylornithine aminotransferase of Haemophilus ducreyi (strain 35000HP / ATCC 700724).